The following is a 405-amino-acid chain: Elongation factor Tu (405 aa).

Positions Lys-10–Glu-213 constitute a tr-type G domain. The G1 stretch occupies residues Gly-19–Ser-26. Residue Gly-19–Ser-26 participates in GTP binding. Mg(2+) is bound at residue Ser-26. Residues Gly-64–Asn-68 form a G2 region. Positions Asp-85–Gly-88 are G3. Residues Asp-85 to His-89 and Asn-140 to Asp-143 each bind GTP. Positions Asn-140–Asp-143 are G4. The G5 stretch occupies residues Ser-178 to Leu-180.

This sequence belongs to the TRAFAC class translation factor GTPase superfamily. Classic translation factor GTPase family. EF-Tu/EF-1A subfamily. Monomer.

The protein resides in the cytoplasm. The enzyme catalyses GTP + H2O = GDP + phosphate + H(+). Its function is as follows. GTP hydrolase that promotes the GTP-dependent binding of aminoacyl-tRNA to the A-site of ribosomes during protein biosynthesis. The sequence is that of Elongation factor Tu from Aquifex pyrophilus.